The following is a 128-amino-acid chain: Con-Ins F1 (128 aa).

Residues 1 to 24 form the signal peptide; that stretch reads MTTSSYFLLVTLGLLLYVCRSSFG. Cystine bridges form between C29–C104, C41–C107, C53–C120, and C106–C111. Positions 59-89 are cleaved as a propeptide — c peptide; it reads LQGGTGKKRGRASPLRKRRAFLSMLKARAKR. E115 is modified (4-carboxyglutamate; partial). Residue S127 is modified to Serine amide.

Belongs to the insulin family. In terms of assembly, heterodimer of A and B chains; disulfide-linked. In terms of tissue distribution, expressed by the venom gland.

Its subcellular location is the secreted. Functionally, this venom insulin facilitates prey capture by rapidly inducing hypoglycemic shock. Intraperitoneal injection of this peptide into zebrafish lowers blood glucose with the same potency than human insulin. In vivo, when applied to water, this peptide reduces overall locomotor activity of zebrafish larvae, observed as a significant decrease in the percentage of time spent swimming and movement frequency. The protein is Con-Ins F1 of Conus floridulus (Cone snail).